The following is a 460-amino-acid chain: Gastric inhibitory polypeptide receptor (460 aa).

Residues 1–18 (MPLRLLLLLLWLWGLQWA) form the signal peptide. The Extracellular portion of the chain corresponds to 19-134 (ETDSEGQTTT…DQTLILERLQ (116 aa)). 3 cysteine pairs are disulfide-bonded: Cys42-Cys66, Cys57-Cys99, and Cys80-Cys114. N-linked (GlcNAc...) asparagine glycans are attached at residues Asn58, Asn68, and Asn73. The chain crosses the membrane as a helical span at residues 135-155 (IMYTVGYSLSLTTLLLALLIL). Over 156–166 (SLFRRLHCTRN) the chain is Cytoplasmic. A helical membrane pass occupies residues 167-185 (YIHMNLFTSFMLRAAAILT). Residues 186–222 (RDQLLPPLGPYTGDQAPTPWNQALAACRTAQIMTQYC) are Extracellular-facing. The chain crosses the membrane as a helical span at residues 223–243 (VGANYTWLLVEGVYLHHLLVI). Topologically, residues 244–255 (VGRSEKGHFRCY) are cytoplasmic. The chain crosses the membrane as a helical span at residues 256 to 276 (LLLGWGAPALFVIPWVIVRYL). Topologically, residues 277–297 (RENTQCWERNEVKAIWWIIRT) are extracellular. A helical transmembrane segment spans residues 298-318 (PILITILINFLIFIRILGILV). The Cytoplasmic portion of the chain corresponds to 319–337 (SKLRTRQMRCPDYRLRLAR). The helical transmembrane segment at 338 to 358 (STLTLVPLLGVHEVVFAPVTE) threads the bilayer. The Extracellular portion of the chain corresponds to 359–370 (EQVEGSLRFAKL). A helical transmembrane segment spans residues 371–391 (AFEIFLSSFQGFLVSVLYCFI). At 392–460 (NKEVQSEIRQ…PGDEVLESYC (69 aa)) the chain is on the cytoplasmic side.

This sequence belongs to the G-protein coupled receptor 2 family. May form homodimers and heterodimers with GLP1R. N-glycosylation is required for cell surface expression and lengthens receptor half-life by preventing degradation in the ER.

It localises to the cell membrane. Functionally, this is a receptor for GIP. The activity of this receptor is mediated by G proteins which activate adenylyl cyclase. The sequence is that of Gastric inhibitory polypeptide receptor (Gipr) from Mus musculus (Mouse).